A 126-amino-acid polypeptide reads, in one-letter code: Holo-[acyl-carrier-protein] synthase (126 aa).

Mg(2+)-binding residues include Asp-9 and Glu-58.

The protein belongs to the P-Pant transferase superfamily. AcpS family. Mg(2+) is required as a cofactor.

The protein resides in the cytoplasm. It carries out the reaction apo-[ACP] + CoA = holo-[ACP] + adenosine 3',5'-bisphosphate + H(+). Its function is as follows. Transfers the 4'-phosphopantetheine moiety from coenzyme A to a Ser of acyl-carrier-protein. This chain is Holo-[acyl-carrier-protein] synthase, found in Buchnera aphidicola subsp. Acyrthosiphon pisum (strain APS) (Acyrthosiphon pisum symbiotic bacterium).